Consider the following 273-residue polypeptide: 4-hydroxy-tetrahydrodipicolinate reductase (273 aa).

Residues 11–16 (GALGRM) and 106–108 (GTT) contribute to the NAD(+) site. The active-site Proton donor/acceptor is the His-162. His-163 lines the (S)-2,3,4,5-tetrahydrodipicolinate pocket. The active-site Proton donor is the Lys-166. 172-173 (GT) contacts (S)-2,3,4,5-tetrahydrodipicolinate.

The protein belongs to the DapB family.

The protein localises to the cytoplasm. It carries out the reaction (S)-2,3,4,5-tetrahydrodipicolinate + NAD(+) + H2O = (2S,4S)-4-hydroxy-2,3,4,5-tetrahydrodipicolinate + NADH + H(+). The catalysed reaction is (S)-2,3,4,5-tetrahydrodipicolinate + NADP(+) + H2O = (2S,4S)-4-hydroxy-2,3,4,5-tetrahydrodipicolinate + NADPH + H(+). It functions in the pathway amino-acid biosynthesis; L-lysine biosynthesis via DAP pathway; (S)-tetrahydrodipicolinate from L-aspartate: step 4/4. In terms of biological role, catalyzes the conversion of 4-hydroxy-tetrahydrodipicolinate (HTPA) to tetrahydrodipicolinate. The sequence is that of 4-hydroxy-tetrahydrodipicolinate reductase from Synechococcus sp. (strain RCC307).